Consider the following 141-residue polypeptide: Methylglyoxal synthase (141 aa).

Residues 1 to 141 form the MGS-like domain; it reads MNIALIAHDK…PKLQKNKSDK (141 aa). Substrate-binding positions include His-8, Lys-12, and 34–37; that span reads TGTT. Asp-60 (proton donor/acceptor) is an active-site residue. Substrate is bound at residue His-87.

Belongs to the methylglyoxal synthase family.

The enzyme catalyses dihydroxyacetone phosphate = methylglyoxal + phosphate. Catalyzes the formation of methylglyoxal from dihydroxyacetone phosphate. The protein is Methylglyoxal synthase of Caldicellulosiruptor bescii (strain ATCC BAA-1888 / DSM 6725 / KCTC 15123 / Z-1320) (Anaerocellum thermophilum).